The following is a 320-amino-acid chain: Ferrochelatase (320 aa).

Positions 194 and 275 each coordinate Fe cation.

It belongs to the ferrochelatase family.

Its subcellular location is the cytoplasm. It catalyses the reaction heme b + 2 H(+) = protoporphyrin IX + Fe(2+). Its pathway is porphyrin-containing compound metabolism; protoheme biosynthesis; protoheme from protoporphyrin-IX: step 1/1. Functionally, catalyzes the ferrous insertion into protoporphyrin IX. This Serratia proteamaculans (strain 568) protein is Ferrochelatase.